The chain runs to 154 residues: SsrA-binding protein (154 aa).

The interval 135–154 is disordered; it reads KREDLKRRQDQRDMARAMKR.

This sequence belongs to the SmpB family.

It localises to the cytoplasm. Required for rescue of stalled ribosomes mediated by trans-translation. Binds to transfer-messenger RNA (tmRNA), required for stable association of tmRNA with ribosomes. tmRNA and SmpB together mimic tRNA shape, replacing the anticodon stem-loop with SmpB. tmRNA is encoded by the ssrA gene; the 2 termini fold to resemble tRNA(Ala) and it encodes a 'tag peptide', a short internal open reading frame. During trans-translation Ala-aminoacylated tmRNA acts like a tRNA, entering the A-site of stalled ribosomes, displacing the stalled mRNA. The ribosome then switches to translate the ORF on the tmRNA; the nascent peptide is terminated with the 'tag peptide' encoded by the tmRNA and targeted for degradation. The ribosome is freed to recommence translation, which seems to be the essential function of trans-translation. This chain is SsrA-binding protein, found in Microcystis aeruginosa (strain NIES-843 / IAM M-2473).